We begin with the raw amino-acid sequence, 942 residues long: Mitogen-activated protein kinase kinase kinase 14 (942 aa).

Residues 136 to 152 (GKRHGKARKKRRKKRSK) show a composition bias toward basic residues. Disordered stretches follow at residues 136-156 (GKRHGKARKKRRKKRSKSLAQ) and 291-326 (VSGQRPLPGPPHLSQLAHGDSQKPLPGPHLESSCPS). The region spanning 402–657 (MTHQPRVGRG…ELRRKVGKAL (256 aa)) is the Protein kinase domain. Residues 403 to 655 (THQPRVGRGS…AMELRRKVGK (253 aa)) form an interaction with ZFP91 region. ATP contacts are provided by residues 408-416 (VGRGSFGEV) and Lys431. Asp517 serves as the catalytic Proton acceptor. Thr561 bears the Phosphothreonine mark. Disordered regions lie at residues 660–756 (VGGL…FPDR) and 801–823 (SDDSEKNPSKASQSSRDTLSSGV). Over residues 707–720 (EPQPPLPPEPPEPS) the composition is skewed to pro residues. Residues 809–823 (SKASQSSRDTLSSGV) show a composition bias toward polar residues.

This sequence belongs to the protein kinase superfamily. STE Ser/Thr protein kinase family. MAP kinase kinase kinase subfamily. Interacts with TRAF2, TRAF3, TRAF5, TRAF6, IKKA and NF-kappa-B2/P100. Interacts with PELI3. Interacts with NIBP; the interaction is direct. Interacts with ARRB1 and ARRB2. Interacts with GRB10. Interacts with ZFP91. Interacts with NLRP12; this interaction promotes proteasomal degradation of MAP3K14. Directly interacts with DDX3X. Interacts (via C-terminus and kinase domain) with PPPC3A (via N-terminus) and PPP3CB. In terms of processing, phosphorylation at Thr-561 is required to activate its kinase activity and 'Lys-63'-linked polyubiquitination. Phosphorylated by CHUK/IKKA leading to MAP3K14 destabilization. Autophosphorylated. Post-translationally, ubiquitinated. Undergoes both 'Lys-48'- and 'Lys-63'-linked polyubiquitination. 'Lys-48'-linked polyubiquitination leads to its degradation by the proteasome, while 'Lys-63'-linked polyubiquitination stabilizes and activates it.

The protein resides in the cytoplasm. The catalysed reaction is L-seryl-[protein] + ATP = O-phospho-L-seryl-[protein] + ADP + H(+). It catalyses the reaction L-threonyl-[protein] + ATP = O-phospho-L-threonyl-[protein] + ADP + H(+). Lymphotoxin beta-activated kinase which seems to be exclusively involved in the activation of NF-kappa-B and its transcriptional activity. Phosphorylates CHUK/IKKA. Promotes proteolytic processing of NFKB2/P100, which leads to activation of NF-kappa-B via the non-canonical pathway. Has an essential role in the non-canonical NF-kappa-B signalining that regulates genes encoding molecules involved in B-cell survival, lymphoid organogenesis, and immune response. Could act in a receptor-selective manner. This chain is Mitogen-activated protein kinase kinase kinase 14, found in Mus musculus (Mouse).